We begin with the raw amino-acid sequence, 107 residues long: Large ribosomal subunit protein uL24 (107 aa).

The protein belongs to the universal ribosomal protein uL24 family. In terms of assembly, part of the 50S ribosomal subunit.

Its function is as follows. One of two assembly initiator proteins, it binds directly to the 5'-end of the 23S rRNA, where it nucleates assembly of the 50S subunit. In terms of biological role, one of the proteins that surrounds the polypeptide exit tunnel on the outside of the subunit. This Thermoanaerobacter pseudethanolicus (strain ATCC 33223 / 39E) (Clostridium thermohydrosulfuricum) protein is Large ribosomal subunit protein uL24.